Reading from the N-terminus, the 413-residue chain is Serine hydroxymethyltransferase (413 aa).

Residues Leu117 and 121–123 (GHL) contribute to the (6S)-5,6,7,8-tetrahydrofolate site. Lys226 carries the N6-(pyridoxal phosphate)lysine modification. Residues Glu239 and 349 to 351 (SPF) contribute to the (6S)-5,6,7,8-tetrahydrofolate site.

This sequence belongs to the SHMT family. In terms of assembly, homodimer. Requires pyridoxal 5'-phosphate as cofactor.

It localises to the cytoplasm. It carries out the reaction (6R)-5,10-methylene-5,6,7,8-tetrahydrofolate + glycine + H2O = (6S)-5,6,7,8-tetrahydrofolate + L-serine. Its pathway is one-carbon metabolism; tetrahydrofolate interconversion. It participates in amino-acid biosynthesis; glycine biosynthesis; glycine from L-serine: step 1/1. Catalyzes the reversible interconversion of serine and glycine with tetrahydrofolate (THF) serving as the one-carbon carrier. This reaction serves as the major source of one-carbon groups required for the biosynthesis of purines, thymidylate, methionine, and other important biomolecules. Also exhibits THF-independent aldolase activity toward beta-hydroxyamino acids, producing glycine and aldehydes, via a retro-aldol mechanism. This Bacillus cytotoxicus (strain DSM 22905 / CIP 110041 / 391-98 / NVH 391-98) protein is Serine hydroxymethyltransferase.